Reading from the N-terminus, the 239-residue chain is Small ribosomal subunit protein uS3 (239 aa).

The KH type-2 domain occupies 38–106 (IRELIEERFK…KTFVNVVEIK (69 aa)).

The protein belongs to the universal ribosomal protein uS3 family. In terms of assembly, part of the 30S ribosomal subunit. Forms a tight complex with proteins S10 and S14.

Its function is as follows. Binds the lower part of the 30S subunit head. Binds mRNA in the 70S ribosome, positioning it for translation. In Elusimicrobium minutum (strain Pei191), this protein is Small ribosomal subunit protein uS3.